Consider the following 372-residue polypeptide: 3-dehydroquinate synthase (372 aa).

NAD(+)-binding positions include 116–120 (GVVGD), 140–141 (TT), lysine 153, lysine 162, and 180–183 (TLKT). The Zn(2+) site is built by glutamate 195, histidine 260, and histidine 277.

This sequence belongs to the sugar phosphate cyclases superfamily. Dehydroquinate synthase family. NAD(+) is required as a cofactor. It depends on Co(2+) as a cofactor. Requires Zn(2+) as cofactor.

It is found in the cytoplasm. The catalysed reaction is 7-phospho-2-dehydro-3-deoxy-D-arabino-heptonate = 3-dehydroquinate + phosphate. It functions in the pathway metabolic intermediate biosynthesis; chorismate biosynthesis; chorismate from D-erythrose 4-phosphate and phosphoenolpyruvate: step 2/7. In terms of biological role, catalyzes the conversion of 3-deoxy-D-arabino-heptulosonate 7-phosphate (DAHP) to dehydroquinate (DHQ). This chain is 3-dehydroquinate synthase, found in Prochlorococcus marinus (strain MIT 9313).